The sequence spans 156 residues: Small ribosomal subunit protein uS7 (156 aa).

The protein belongs to the universal ribosomal protein uS7 family. In terms of assembly, part of the 30S ribosomal subunit. Contacts proteins S9 and S11.

In terms of biological role, one of the primary rRNA binding proteins, it binds directly to 16S rRNA where it nucleates assembly of the head domain of the 30S subunit. Is located at the subunit interface close to the decoding center, probably blocks exit of the E-site tRNA. The chain is Small ribosomal subunit protein uS7 from Streptococcus gordonii (strain Challis / ATCC 35105 / BCRC 15272 / CH1 / DL1 / V288).